Consider the following 280-residue polypeptide: Elongation factor 1-delta (280 aa).

Ala-2 bears the N-acetylalanine mark. Lys-17 carries the N6-acetyllysine modification. 5 positions are modified to phosphoserine: Ser-37, Ser-44, Ser-60, Ser-86, and Ser-106. Lys-107 carries the N6-acetyllysine modification. Residues Ser-113 to Thr-171 form a disordered region. Lys-117 bears the N6-acetyllysine; alternate mark. Lys-117 is modified (N6-succinyllysine; alternate). Ser-119 bears the Phosphoserine mark. The residue at position 129 (Thr-129) is a Phosphothreonine. At Ser-133 the chain carries Phosphoserine. Residue Thr-147 is modified to Phosphothreonine. The span at Thr-149–Lys-168 shows a compositional bias: acidic residues. Ser-162 bears the Phosphoserine; by CK2 mark.

The protein belongs to the EF-1-beta/EF-1-delta family. EF-1 is composed of 4 subunits: alpha, beta, delta, and gamma.

Its function is as follows. EF-1-beta and EF-1-delta stimulate the exchange of GDP bound to EF-1-alpha to GTP. The polypeptide is Elongation factor 1-delta (EEF1D) (Bos taurus (Bovine)).